A 45-amino-acid chain; its full sequence is Iota-conotoxin-like R11.13 (45 aa).

Cystine bridges form between C5/C19, C12/C22, C18/C27, and C21/C36. At L43 the chain carries D-leucine. A propeptide (removed by a carboxypeptidase) is located at residue R45.

It belongs to the conotoxin I1 superfamily. Expressed by the venom duct.

The protein localises to the secreted. Functionally, iota-conotoxins bind to voltage-gated sodium channels (Nav) and act as agonists by shifting the voltage-dependence of activation to more hyperpolarized levels. Produces general excitatory symptoms. The sequence is that of Iota-conotoxin-like R11.13 from Conus radiatus (Rayed cone).